We begin with the raw amino-acid sequence, 102 residues long: Carboxysome shell protein CsoS1C (102 aa).

In terms of domain architecture, BMC spans 8 to 93 (ALGMIETRGL…PHKEVEPVLA (86 aa)).

Belongs to the bacterial microcompartments protein family. CsoS1 subfamily. As to quaternary structure, homohexamer with a small central pore.

It is found in the carboxysome. In terms of biological role, one of shell proteins of the carboxysome, a polyhedral inclusion where RuBisCO (ribulose bisphosphate carboxylase, ccbL-ccbS) is sequestered. Assembles into hexamers which make sheets that form the facets of the polyhedral carboxysome. The shell probably limits the diffusion of CO(2) into and out of the carboxysome. This Hydrogenovibrio crunogenus (strain DSM 25203 / XCL-2) (Thiomicrospira crunogena) protein is Carboxysome shell protein CsoS1C.